We begin with the raw amino-acid sequence, 163 residues long: Cytochrome b6-f complex subunit 4 (163 aa).

The next 3 membrane-spanning stretches (helical) occupy residues 36 to 56, 95 to 115, and 131 to 151; these read LLYI…GLAV, LLGV…PFLE, and TVFL…TLPI.

Belongs to the cytochrome b family. PetD subfamily. In terms of assembly, the 4 large subunits of the cytochrome b6-f complex are cytochrome b6, subunit IV (17 kDa polypeptide, petD), cytochrome f and the Rieske protein, while the 4 small subunits are petG, petL, petM and petN. The complex functions as a dimer.

It localises to the plastid. The protein resides in the chloroplast thylakoid membrane. In terms of biological role, component of the cytochrome b6-f complex, which mediates electron transfer between photosystem II (PSII) and photosystem I (PSI), cyclic electron flow around PSI, and state transitions. This Pelargonium hortorum (Common geranium) protein is Cytochrome b6-f complex subunit 4.